The following is a 312-amino-acid chain: R2-like ligand binding oxidase (312 aa).

Mn(2+)-binding residues include glutamate 68, glutamate 101, and histidine 104. Residues 71–162 (VTQDIQPFMA…QAQVRASVTY (92 aa)) constitute a cross-link (3-(O4'-tyrosyl)-valine (Val-Tyr)). Glutamate 101 is a binding site for Fe cation. Fe cation contacts are provided by glutamate 167, glutamate 202, and histidine 205.

The protein belongs to the ribonucleoside diphosphate reductase small chain family. R2-like ligand binding oxidase subfamily. Homodimer. Fe cation serves as cofactor. It depends on Mn(2+) as a cofactor.

Functionally, probable oxidase that might be involved in lipid metabolism. The chain is R2-like ligand binding oxidase from Mycolicibacterium gilvum (strain PYR-GCK) (Mycobacterium gilvum (strain PYR-GCK)).